The chain runs to 435 residues: Serine--tRNA ligase (435 aa).

Thr-241–Glu-243 is a binding site for L-serine. Residue Arg-272–Glu-274 coordinates ATP. Glu-295 serves as a coordination point for L-serine. Glu-359 to Ser-362 serves as a coordination point for ATP. Ser-395 lines the L-serine pocket.

This sequence belongs to the class-II aminoacyl-tRNA synthetase family. Type-1 seryl-tRNA synthetase subfamily. As to quaternary structure, homodimer. The tRNA molecule binds across the dimer.

It is found in the cytoplasm. It catalyses the reaction tRNA(Ser) + L-serine + ATP = L-seryl-tRNA(Ser) + AMP + diphosphate + H(+). It carries out the reaction tRNA(Sec) + L-serine + ATP = L-seryl-tRNA(Sec) + AMP + diphosphate + H(+). It participates in aminoacyl-tRNA biosynthesis; selenocysteinyl-tRNA(Sec) biosynthesis; L-seryl-tRNA(Sec) from L-serine and tRNA(Sec): step 1/1. Functionally, catalyzes the attachment of serine to tRNA(Ser). Is also able to aminoacylate tRNA(Sec) with serine, to form the misacylated tRNA L-seryl-tRNA(Sec), which will be further converted into selenocysteinyl-tRNA(Sec). This chain is Serine--tRNA ligase, found in Actinobacillus pleuropneumoniae serotype 7 (strain AP76).